A 312-amino-acid chain; its full sequence is 4-hydroxy-3-methylbut-2-enyl diphosphate reductase (312 aa).

[4Fe-4S] cluster is bound at residue cysteine 15. Residues histidine 44 and histidine 77 each contribute to the (2E)-4-hydroxy-3-methylbut-2-enyl diphosphate site. Residues histidine 44 and histidine 77 each contribute to the dimethylallyl diphosphate site. Histidine 44 and histidine 77 together coordinate isopentenyl diphosphate. Position 99 (cysteine 99) interacts with [4Fe-4S] cluster. Histidine 127 contributes to the (2E)-4-hydroxy-3-methylbut-2-enyl diphosphate binding site. Position 127 (histidine 127) interacts with dimethylallyl diphosphate. Histidine 127 is a binding site for isopentenyl diphosphate. Glutamate 129 acts as the Proton donor in catalysis. Threonine 167 is a (2E)-4-hydroxy-3-methylbut-2-enyl diphosphate binding site. A [4Fe-4S] cluster-binding site is contributed by cysteine 197. Residues serine 225, serine 226, asparagine 227, and serine 269 each coordinate (2E)-4-hydroxy-3-methylbut-2-enyl diphosphate. 4 residues coordinate dimethylallyl diphosphate: serine 225, serine 226, asparagine 227, and serine 269. Positions 225, 226, 227, and 269 each coordinate isopentenyl diphosphate.

It belongs to the IspH family. [4Fe-4S] cluster is required as a cofactor.

The catalysed reaction is isopentenyl diphosphate + 2 oxidized [2Fe-2S]-[ferredoxin] + H2O = (2E)-4-hydroxy-3-methylbut-2-enyl diphosphate + 2 reduced [2Fe-2S]-[ferredoxin] + 2 H(+). The enzyme catalyses dimethylallyl diphosphate + 2 oxidized [2Fe-2S]-[ferredoxin] + H2O = (2E)-4-hydroxy-3-methylbut-2-enyl diphosphate + 2 reduced [2Fe-2S]-[ferredoxin] + 2 H(+). It functions in the pathway isoprenoid biosynthesis; dimethylallyl diphosphate biosynthesis; dimethylallyl diphosphate from (2E)-4-hydroxy-3-methylbutenyl diphosphate: step 1/1. It participates in isoprenoid biosynthesis; isopentenyl diphosphate biosynthesis via DXP pathway; isopentenyl diphosphate from 1-deoxy-D-xylulose 5-phosphate: step 6/6. Functionally, catalyzes the conversion of 1-hydroxy-2-methyl-2-(E)-butenyl 4-diphosphate (HMBPP) into a mixture of isopentenyl diphosphate (IPP) and dimethylallyl diphosphate (DMAPP). Acts in the terminal step of the DOXP/MEP pathway for isoprenoid precursor biosynthesis. The sequence is that of 4-hydroxy-3-methylbut-2-enyl diphosphate reductase from Aromatoleum aromaticum (strain DSM 19018 / LMG 30748 / EbN1) (Azoarcus sp. (strain EbN1)).